The chain runs to 731 residues: Polyribonucleotide nucleotidyltransferase (731 aa).

Mg(2+) is bound by residues aspartate 488 and aspartate 494. The KH domain maps to 555 to 614 (PRIEVINIAVDKIRDVIGSGGKVIREIVEQTGAKINIEDDGTIKIASADAKTIEAAKRWI). One can recognise an S1 motif domain in the interval 624–692 (GAIYQGTVVK…ERGKVRLSMK (69 aa)). Residues 693 to 731 (AVDQKTGKEMTDDKSVKEEKCMDEKKQPENKRRRKKKEE) are disordered. Residues 694–722 (VDQKTGKEMTDDKSVKEEKCMDEKKQPEN) are compositionally biased toward basic and acidic residues.

This sequence belongs to the polyribonucleotide nucleotidyltransferase family. Requires Mg(2+) as cofactor.

It localises to the cytoplasm. The catalysed reaction is RNA(n+1) + phosphate = RNA(n) + a ribonucleoside 5'-diphosphate. Functionally, involved in mRNA degradation. Catalyzes the phosphorolysis of single-stranded polyribonucleotides processively in the 3'- to 5'-direction. In Bartonella tribocorum (strain CIP 105476 / IBS 506), this protein is Polyribonucleotide nucleotidyltransferase.